Here is a 169-residue protein sequence, read N- to C-terminus: Putative phosphoesterase BLi01284/BL02661 (169 aa).

Residue H34 is the Proton donor of the active site. 2 consecutive short sequence motifs (HXTX) follow at residues 34-37 (HLTL) and 115-118 (HVTV). Catalysis depends on H115, which acts as the Proton acceptor.

It belongs to the 2H phosphoesterase superfamily. YjcG family.

The sequence is that of Putative phosphoesterase BLi01284/BL02661 from Bacillus licheniformis (strain ATCC 14580 / DSM 13 / JCM 2505 / CCUG 7422 / NBRC 12200 / NCIMB 9375 / NCTC 10341 / NRRL NRS-1264 / Gibson 46).